Consider the following 82-residue polypeptide: Sec-independent protein translocase protein TatA (82 aa).

Residues 1–21 (MGIFDWKHWIVILIVVVLVFG) form a helical membrane-spanning segment. Residues 43-82 (VNTEEDDKKEQPAAQPAQPLNQPHTIDAQAQKVEEPARKD) form a disordered region.

It belongs to the TatA/E family. As to quaternary structure, the Tat system comprises two distinct complexes: a TatABC complex, containing multiple copies of TatA, TatB and TatC subunits, and a separate TatA complex, containing only TatA subunits. Substrates initially bind to the TatABC complex, which probably triggers association of the separate TatA complex to form the active translocon.

The protein resides in the cell inner membrane. In terms of biological role, part of the twin-arginine translocation (Tat) system that transports large folded proteins containing a characteristic twin-arginine motif in their signal peptide across membranes. TatA could form the protein-conducting channel of the Tat system. The sequence is that of Sec-independent protein translocase protein TatA from Pseudomonas paraeruginosa (strain DSM 24068 / PA7) (Pseudomonas aeruginosa (strain PA7)).